The sequence spans 791 residues: DUF1769 family protein duc1 (791 aa).

The tract at residues 158 to 189 (ADSQESDTESLPEINDSSDVSLSDLPSTNVTP) is disordered. Positions 174–184 (SSDVSLSDLPS) are enriched in low complexity. The FFAT motif lies at 373–379 (RYFTALE). A Phosphotyrosine modification is found at Tyr374. Residue Thr376 is modified to Phosphothreonine. Disordered stretches follow at residues 381–505 (QQDQ…SNRR), 542–606 (NVAG…VDGK), and 630–658 (PKPV…NLDP). The segment covering 415-426 (LIKRMSLRSKKS) has biased composition (basic residues). Positions 444 to 453 (STASAASTSA) are enriched in low complexity. Over residues 455–473 (KTEKEKKMSAPRRSLDKLI) the composition is skewed to basic and acidic residues. A phosphoserine mark is found at Ser477 and Ser493. Residues 477-487 (SLHRHHHHHHK) show a composition bias toward basic residues. Polar residues predominate over residues 555 to 564 (EQTSITSGVP). Ser574 bears the Phosphoserine mark. Basic and acidic residues predominate over residues 574 to 586 (STPEKIVEERSID). The span at 587–601 (EVSQSNTPSSKQLPQ) shows a compositional bias: polar residues.

This sequence belongs to the UPF0590 family. In terms of assembly, interacts (via FFAT-motif) with scs2 (via MSP domain); the interaction is direct and serves to restrict the localization of duc1 to areas of cell membrane-endoplasmic reticulum contact sites, and away from the cell division site.

It is found in the cell membrane. Functionally, promotes the proper distribution of phosphatidylinositol 4,5-bisphosphate (PtdIns(4,5)P2/PIP2) synthesis at the cell membrane. May bind phosphatidylinositol 4,5-bisphosphate (PtdIns(4,5)P2/PIP2) and is required for robust anchoring of the contractile ring to the cell membrane. In Schizosaccharomyces pombe (strain 972 / ATCC 24843) (Fission yeast), this protein is DUF1769 family protein duc1.